Here is a 237-residue protein sequence, read N- to C-terminus: DNA repair protein RecO (237 aa).

Belongs to the RecO family.

Functionally, involved in DNA repair and RecF pathway recombination. In Rickettsia rickettsii (strain Iowa), this protein is DNA repair protein RecO.